The primary structure comprises 98 residues: Large ribosomal subunit protein uL23 (98 aa).

This sequence belongs to the universal ribosomal protein uL23 family. Part of the 50S ribosomal subunit. Contacts protein L29, and trigger factor when it is bound to the ribosome.

One of the early assembly proteins it binds 23S rRNA. One of the proteins that surrounds the polypeptide exit tunnel on the outside of the ribosome. Forms the main docking site for trigger factor binding to the ribosome. This chain is Large ribosomal subunit protein uL23, found in Marinomonas sp. (strain MWYL1).